Here is a 466-residue protein sequence, read N- to C-terminus: MKLQISGLLLVTAVAYATIEAPEEFVSLAEMEDTLLRNLFRGYQKWVRPILHANDTITVRFGLKISQLVDVDEKNHLMTTNVWLWQEWTDYKLRWNPEDYGGITSIRVPSETIWLPDIVLYENADGRFEGSLMTKAIVRFNGTIMWTPPASYKSSCTMDVTFFPFDRQNCSMKFGSWTYDGTMVDLTLLDAYVDRKDFFDNGEWEILNATGQRGSRRDGIYSYPYVTYSFILKRLPLFYTLFLIIPCLGLSFLTVLVFYLPSDEGEKLLLSTSVLVSLTVFLLVIEEIIPSSSKVIPLIGEYLLFIMIFVTFSIIVTLFVINVHHRSSATYHPMAPWVKSLFLQRLPRLLCMRGHTDRYQYPDIELRSPELKRGMKKGQQKSAGGGRGGLKEDENQAWIALLEKATHSVHYISRHIKKEHFIREVVQDWKFVAQVLDRIFLWVFLTASVLGTILIFTPALHMYLST.

The first 28 residues, 1–28 (MKLQISGLLLVTAVAYATIEAPEEFVSL), serve as a signal peptide directing secretion. At 29-235 (AEMEDTLLRN…VTYSFILKRL (207 aa)) the chain is on the extracellular side. N-linked (GlcNAc...) asparagine glycans are attached at residues Asn-54, Asn-141, Asn-169, and Asn-208. Cys-156 and Cys-170 are oxidised to a cystine. 3 helical membrane passes run 236-260 (PLFYTLFLIIPCLGLSFLTVLVFYL), 268-285 (LLLSTSVLVSLTVFLLVI), and 302-323 (YLLFIMIFVTFSIIVTLFVINV). Topologically, residues 324–438 (HHRSSATYHP…WKFVAQVLDR (115 aa)) are cytoplasmic. A helical transmembrane segment spans residues 439 to 456 (IFLWVFLTASVLGTILIF).

Belongs to the ligand-gated ion channel (TC 1.A.9) family. Acetylcholine receptor (TC 1.A.9.1) subfamily. As to quaternary structure, neuronal AChR seems to be composed of two different type of subunits: alpha and non-alpha (beta). As to expression, retina, tectum and brain.

Its subcellular location is the postsynaptic cell membrane. It is found in the cell membrane. Its function is as follows. After binding acetylcholine, the AChR responds by an extensive change in conformation that affects all subunits and leads to opening of an ion-conducting channel across the plasma membrane. The protein is Neuronal acetylcholine receptor subunit non-alpha-3 of Carassius auratus (Goldfish).